An 896-amino-acid polypeptide reads, in one-letter code: C-type lectin domain-containing protein 180 (896 aa).

The signal sequence occupies residues 1-18; sequence MRHLIFTGFVLTLTALEA. The region spanning 54–178 is the C-type lectin domain; it reads PWGDLYQFRA…CESTSPDHHA (125 aa). Asparagine 133 carries an N-linked (GlcNAc...) asparagine glycan. Cysteine 154 and cysteine 169 are joined by a disulfide. Residues asparagine 221 and asparagine 235 are each glycosylated (N-linked (GlcNAc...) asparagine). Disordered stretches follow at residues 243-264, 354-436, 492-519, and 557-809; these read STVK…SVSK, VKQE…LAPE, EKLE…EEQK, and KVKA…TTKP. The segment covering 250–260 has biased composition (acidic residues); sequence SEEETSSEEEE. Composition is skewed to basic and acidic residues over residues 354-382 and 395-406; these read VKQE…KISE and DMPKADIEPPKE. Residues 407 to 426 show a composition bias toward acidic residues; that stretch reads EDCDEEGSGSGSGEEDEKDE. The span at 427 to 436 shows a compositional bias: basic and acidic residues; it reads SSEKIELAPE. 3 stretches are compositionally biased toward basic and acidic residues: residues 575–590, 607–663, and 683–692; these read KSAK…KVGN, QNRE…ETKL, and EEPKSDKDSE. Residues 727–739 show a composition bias toward low complexity; sequence STTTESTTVAVKE. The segment covering 740–768 has biased composition (basic and acidic residues); it reads VPVDEIEKIAKLEAKQHTEDEKVTVETKQ. Residues 773–809 show a composition bias toward low complexity; the sequence is TPAPTTSEKTSTTAAPSTKPAEETTTTTEAPSTTTKP.

Its subcellular location is the secreted. The protein is C-type lectin domain-containing protein 180 (clec-180) of Caenorhabditis elegans.